Consider the following 754-residue polypeptide: 5-methyltetrahydropteroyltriglutamate--homocysteine methyltransferase (754 aa).

5-methyltetrahydropteroyltri-L-glutamate is bound by residues 17-20 (RELK) and K117. L-homocysteine-binding positions include 431–433 (IGS) and E484. L-methionine contacts are provided by residues 431 to 433 (IGS) and E484. 5-methyltetrahydropteroyltri-L-glutamate is bound by residues 515-516 (RC) and W561. D599 contributes to the L-homocysteine binding site. D599 contacts L-methionine. E605 lines the 5-methyltetrahydropteroyltri-L-glutamate pocket. Positions 641, 643, and 665 each coordinate Zn(2+). Catalysis depends on H694, which acts as the Proton donor. Residue C726 coordinates Zn(2+).

Belongs to the vitamin-B12 independent methionine synthase family. Zn(2+) is required as a cofactor.

It carries out the reaction 5-methyltetrahydropteroyltri-L-glutamate + L-homocysteine = tetrahydropteroyltri-L-glutamate + L-methionine. The protein operates within amino-acid biosynthesis; L-methionine biosynthesis via de novo pathway; L-methionine from L-homocysteine (MetE route): step 1/1. Functionally, catalyzes the transfer of a methyl group from 5-methyltetrahydrofolate to homocysteine resulting in methionine formation. This is 5-methyltetrahydropteroyltriglutamate--homocysteine methyltransferase from Salmonella paratyphi A (strain ATCC 9150 / SARB42).